The chain runs to 465 residues: Ribulose bisphosphate carboxylase large chain (465 aa).

Lys4 is modified (N6,N6,N6-trimethyllysine). Substrate is bound by residues Asn113 and Thr163. Residue Lys165 is the Proton acceptor of the active site. Residue Lys167 coordinates substrate. Positions 191, 193, and 194 each coordinate Mg(2+). At Lys191 the chain carries N6-carboxylysine. His284 (proton acceptor) is an active-site residue. 3 residues coordinate substrate: Arg285, His317, and Ser369.

Belongs to the RuBisCO large chain family. Type I subfamily. Heterohexadecamer of 8 large chains and 8 small chains. The cofactor is Mg(2+).

It is found in the plastid. It localises to the chloroplast. It carries out the reaction 2 (2R)-3-phosphoglycerate + 2 H(+) = D-ribulose 1,5-bisphosphate + CO2 + H2O. The enzyme catalyses D-ribulose 1,5-bisphosphate + O2 = 2-phosphoglycolate + (2R)-3-phosphoglycerate + 2 H(+). Its function is as follows. RuBisCO catalyzes two reactions: the carboxylation of D-ribulose 1,5-bisphosphate, the primary event in carbon dioxide fixation, as well as the oxidative fragmentation of the pentose substrate in the photorespiration process. Both reactions occur simultaneously and in competition at the same active site. The protein is Ribulose bisphosphate carboxylase large chain of Sarracenia flava (Yellow pitcher plant).